Reading from the N-terminus, the 83-residue chain is Protein ShK-like4 (83 aa).

Residues 1-21 form the signal peptide; sequence MDTRVIAVLFVAIMVLSSTNA. A propeptide spanning residues 22-48 is cleaved from the precursor; the sequence is LPKQKGSYKNMNHADFLKGLDRASSKR. 3 disulfide bridges follow: Cys50–Cys82, Cys57–Cys75, and Cys67–Cys79. The 34-residue stretch at 50-83 folds into the ShKT domain; it reads CRDSHWSCFFQSNYEDICSTAQAEECALSCGLCE.

Post-translationally, contains 3 disulfide bonds. As to expression, expressed in various neurons (ectodermal sensory cells) (in planulae and primary polyps). Not expressed in nematocytes.

Its function is as follows. Probable neuropeptide. The polypeptide is Protein ShK-like4 (Nematostella vectensis (Starlet sea anemone)).